The primary structure comprises 243 residues: Probable 6-phosphogluconolactonase (243 aa).

Belongs to the glucosamine/galactosamine-6-phosphate isomerase family. 6-phosphogluconolactonase subfamily.

The catalysed reaction is 6-phospho-D-glucono-1,5-lactone + H2O = 6-phospho-D-gluconate + H(+). It participates in carbohydrate degradation; pentose phosphate pathway; D-ribulose 5-phosphate from D-glucose 6-phosphate (oxidative stage): step 2/3. Hydrolysis of 6-phosphogluconolactone to 6-phosphogluconate. The polypeptide is Probable 6-phosphogluconolactonase (Drosophila melanogaster (Fruit fly)).